Consider the following 250-residue polypeptide: Manganese transport system ATP-binding protein MntB (250 aa).

An ABC transporter domain is found at 4–236 (VELDNVTVAY…NLQKTYGGRL (233 aa)). Residue 36–43 (GPNGAGKS) participates in ATP binding.

This sequence belongs to the ABC transporter superfamily. In terms of assembly, the complex is probably composed of two ATP-binding proteins (MntB), two transmembrane proteins (MntC and MntD) and a solute-binding protein (MntA).

It is found in the cell membrane. Probably part of the ABC transporter complex MntABCD involved in manganese import. Probably responsible for energy coupling to the transport system. The protein is Manganese transport system ATP-binding protein MntB of Bacillus subtilis (strain 168).